A 699-amino-acid polypeptide reads, in one-letter code: Protein STRUBBELIG-RECEPTOR FAMILY 5 (699 aa).

Positions 1–22 are cleaved as a signal peptide; the sequence is MTQKLVRLVIVSLAITVTLLQA. At 23–273 the chain is on the extracellular side; it reads KTDNQEVSAL…DGGGITAGTG (251 aa). LRR repeat units lie at residues 93-115, 116-136, 139-161, 163-186, and 187-209; these read SLTT…LPPN, IANL…SLSQ, NLQS…FQKL, KLET…ANLT, and SLKK…RNLA. N-linked (GlcNAc...) asparagine glycosylation occurs at Asn-184. Positions 239 to 263 are disordered; that stretch reads NDWSTETAPPPPPGVKYGRKSSGSK. Residues 274–294 form a helical membrane-spanning segment; the sequence is MVIAGACLGVLVLIIVLIALV. Over 295–699 the chain is Cytoplasmic; the sequence is SKKKSSLSPH…SYRAHDDYDY (405 aa). A Phosphoserine modification is found at Ser-368. The Protein kinase domain maps to 404–675; the sequence is FSPGNLLGEG…SEVVEALVRM (272 aa). ATP contacts are provided by residues 410-418 and Lys-432; that span reads LGEGSIGRV.

Belongs to the protein kinase superfamily. Ser/Thr protein kinase family. Expressed in leaves and flowers.

Its subcellular location is the membrane. This is Protein STRUBBELIG-RECEPTOR FAMILY 5 (SRF5) from Arabidopsis thaliana (Mouse-ear cress).